The chain runs to 116 residues: U11-theraphotoxin-Hhn1b (116 aa).

An N-terminal signal peptide occupies residues 1-21 (MNTVRVAFLLVFVLAVSLGQA). The propeptide occupies 22 to 74 (DKDENRMEMQEKTEQGKSYLDFAENLLLQKLEELEAKLLEEDSEESRNSRQKR). Positions 61–83 (EEDSEESRNSRQKRCIGEGVPCD) are disordered. Disulfide bonds link Cys75/Cys90, Cys82/Cys95, and Cys89/Cys110.

It belongs to the neurotoxin 14 (magi-1) family. 01 (HNTX-16) subfamily. As to expression, expressed by the venom gland.

It localises to the secreted. In terms of biological role, probable ion channel inhibitor. This Cyriopagopus hainanus (Chinese bird spider) protein is U11-theraphotoxin-Hhn1b.